The following is a 305-amino-acid chain: tRNA dimethylallyltransferase (305 aa).

Residue 11 to 18 (GPTAVGKT) participates in ATP binding. Substrate is bound at residue 13 to 18 (TAVGKT). The tract at residues 36-39 (DSMQ) is interaction with substrate tRNA.

Belongs to the IPP transferase family. As to quaternary structure, monomer. It depends on Mg(2+) as a cofactor.

It carries out the reaction adenosine(37) in tRNA + dimethylallyl diphosphate = N(6)-dimethylallyladenosine(37) in tRNA + diphosphate. Catalyzes the transfer of a dimethylallyl group onto the adenine at position 37 in tRNAs that read codons beginning with uridine, leading to the formation of N6-(dimethylallyl)adenosine (i(6)A). This is tRNA dimethylallyltransferase from Listeria monocytogenes serotype 4b (strain CLIP80459).